A 714-amino-acid chain; its full sequence is Fatty acid oxidation complex subunit alpha (714 aa).

The segment at 1–190 is enoyl-CoA hydratase; the sequence is MDMTSAFTLN…KSGLVDEIVP (190 aa). The 3-hydroxyacyl-CoA dehydrogenase stretch occupies residues 306-714; the sequence is GTLDSIGILG…FWKTSATDRH (409 aa).

In the N-terminal section; belongs to the enoyl-CoA hydratase/isomerase family. This sequence in the central section; belongs to the 3-hydroxyacyl-CoA dehydrogenase family. As to quaternary structure, heterotetramer of two alpha chains (FadJ) and two beta chains (FadI).

Its subcellular location is the cytoplasm. It carries out the reaction a (3S)-3-hydroxyacyl-CoA = a (2E)-enoyl-CoA + H2O. It catalyses the reaction a 4-saturated-(3S)-3-hydroxyacyl-CoA = a (3E)-enoyl-CoA + H2O. The catalysed reaction is a (3S)-3-hydroxyacyl-CoA + NAD(+) = a 3-oxoacyl-CoA + NADH + H(+). The enzyme catalyses (3S)-3-hydroxybutanoyl-CoA = (3R)-3-hydroxybutanoyl-CoA. Its pathway is lipid metabolism; fatty acid beta-oxidation. Its function is as follows. Catalyzes the formation of a hydroxyacyl-CoA by addition of water on enoyl-CoA. Also exhibits 3-hydroxyacyl-CoA epimerase and 3-hydroxyacyl-CoA dehydrogenase activities. The protein is Fatty acid oxidation complex subunit alpha of Escherichia fergusonii (strain ATCC 35469 / DSM 13698 / CCUG 18766 / IAM 14443 / JCM 21226 / LMG 7866 / NBRC 102419 / NCTC 12128 / CDC 0568-73).